We begin with the raw amino-acid sequence, 219 residues long: Protein-L-isoaspartate O-methyltransferase (219 aa).

Residue Ser65 is part of the active site.

The protein belongs to the methyltransferase superfamily. L-isoaspartyl/D-aspartyl protein methyltransferase family. As to quaternary structure, monomer.

It is found in the cytoplasm. It carries out the reaction [protein]-L-isoaspartate + S-adenosyl-L-methionine = [protein]-L-isoaspartate alpha-methyl ester + S-adenosyl-L-homocysteine. Its function is as follows. Catalyzes the methyl esterification of L-isoaspartyl residues in peptides and proteins that result from spontaneous decomposition of normal L-aspartyl and L-asparaginyl residues. It plays a role in the repair and/or degradation of damaged proteins. This Pyrococcus furiosus (strain ATCC 43587 / DSM 3638 / JCM 8422 / Vc1) protein is Protein-L-isoaspartate O-methyltransferase (pcm).